We begin with the raw amino-acid sequence, 445 residues long: Tubulin beta-9 chain (445 aa).

GTP-binding residues include Q11, E69, S138, G142, T143, G144, N204, and N226. Mg(2+) is bound at residue E69. The interval 423–445 (QQYQDATADDEEYEEEEEYEAEA) is disordered. Residues 429–445 (TADDEEYEEEEEYEAEA) are compositionally biased toward acidic residues.

This sequence belongs to the tubulin family. In terms of assembly, dimer of alpha and beta chains. A typical microtubule is a hollow water-filled tube with an outer diameter of 25 nm and an inner diameter of 15 nM. Alpha-beta heterodimers associate head-to-tail to form protofilaments running lengthwise along the microtubule wall with the beta-tubulin subunit facing the microtubule plus end conferring a structural polarity. Microtubules usually have 13 protofilaments but different protofilament numbers can be found in some organisms and specialized cells. It depends on Mg(2+) as a cofactor.

The protein localises to the cytoplasm. It localises to the cytoskeleton. Functionally, tubulin is the major constituent of microtubules, a cylinder consisting of laterally associated linear protofilaments composed of alpha- and beta-tubulin heterodimers. Microtubules grow by the addition of GTP-tubulin dimers to the microtubule end, where a stabilizing cap forms. Below the cap, tubulin dimers are in GDP-bound state, owing to GTPase activity of alpha-tubulin. This Gossypium hirsutum (Upland cotton) protein is Tubulin beta-9 chain.